Reading from the N-terminus, the 741-residue chain is MEHTYQYAWIIPLLPLTVTMLIGLGLLLFPIATKNLRRMWAVPSVLFLSIGMLLSVELAIQQINQSSVYKYLWSWTINNDFSLEFGYLIDPLTSIMSILITTVGILVLIYSDNYMSHDQGYLRFFSYLSFFNASMLGLVTSSNLIQIYIFWELVGMCSYLLIGFWFARPIAANACQKAFVTNRVGDFGLLLGILGLYWITGSFEFRDLFELCNNLIPNNGVNSLFATLCAFLLFLGAVAKSAQFPLHVWLPDAMEGPTPISALIHAATMVAAGIFLVARLLPLFIVIPYIMNLISLIGVITLLLGATLALSQRDIKRSLAYSTMSQLGYIMLAPGIGSYRTALFHLITHAYSKALLFLGSGSIIHSMEPIVGYSPEKSQNMALMGGLTKYVPITKTTFFWGTLSLCGIPPLACFWSKDEILHDSWLYSPIFAIIAYATAGLTAFYMFRMYLLTFDGYLRIHFKKYSGNKKGSFYSISIWGQKELKPVNSNFLLSTVNNNEKVSFFSTKTSQIDGNVRPLMHSLSIHFSNLSKKDIFTYPHESDNTMLLPLLLLGLFTWFVGLIGIPFNQEEEGFDILSKWLIPPINLLHQNSSSPVDWYEFITNSILSVSISVFGIFTASLLYGSVYSSFKNMELINSVVKISPKRSLLDRIINVIYNWSCNRGYIDVFYARSLTMMIRGLAQLTHFFDRRVIDGITNGFGIVSFFVGEGIKYAGGGRISSYIFYYSSYVLIFVLIFYFFI.

A run of 15 helical transmembrane segments spans residues Trp9 to Phe29, Trp40 to Ile60, Ile89 to Ile109, Phe125 to Ile145, Ile147 to Ala167, Gly185 to Phe205, Asn219 to Ala239, Thr258 to Ala278, Leu280 to Ile300, Leu327 to Ile347, Thr396 to Ser416, Trp425 to Tyr445, Leu547 to Phe567, Ile606 to Val626, and Ser721 to Ile741.

This sequence belongs to the complex I subunit 5 family. As to quaternary structure, NDH is composed of at least 16 different subunits, 5 of which are encoded in the nucleus.

The protein localises to the plastid. The protein resides in the chloroplast thylakoid membrane. The catalysed reaction is a plastoquinone + NADH + (n+1) H(+)(in) = a plastoquinol + NAD(+) + n H(+)(out). The enzyme catalyses a plastoquinone + NADPH + (n+1) H(+)(in) = a plastoquinol + NADP(+) + n H(+)(out). Functionally, NDH shuttles electrons from NAD(P)H:plastoquinone, via FMN and iron-sulfur (Fe-S) centers, to quinones in the photosynthetic chain and possibly in a chloroplast respiratory chain. The immediate electron acceptor for the enzyme in this species is believed to be plastoquinone. Couples the redox reaction to proton translocation, and thus conserves the redox energy in a proton gradient. The sequence is that of NAD(P)H-quinone oxidoreductase subunit 5, chloroplastic (ndhF) from Ceratophyllum demersum (Rigid hornwort).